The primary structure comprises 374 residues: UPF0674 endoplasmic reticulum membrane protein C2G5.01 (374 aa).

The chain crosses the membrane as a helical span at residues 49–68 (FRLEFVILACFFLYVFSFIT). Asn287 carries an N-linked (GlcNAc...) asparagine glycan. The segment at 335–374 (KAAKKKVKSSGDISKLSESDQKKRMERERQRKMRRRAKKM) is disordered. The span at 349-363 (KLSESDQKKRMERER) shows a compositional bias: basic and acidic residues. A compositionally biased stretch (basic residues) spans 364-374 (QRKMRRRAKKM).

The protein belongs to the UPF0674 family.

It is found in the endoplasmic reticulum membrane. The polypeptide is UPF0674 endoplasmic reticulum membrane protein C2G5.01 (Schizosaccharomyces pombe (strain 972 / ATCC 24843) (Fission yeast)).